Here is a 964-residue protein sequence, read N- to C-terminus: Protein translocase subunit SecA (964 aa).

ATP contacts are provided by residues Gln-86, 104-108, and Asp-494; that span reads GEGKT. A disordered region spans residues 846–964; it reads ETAESADTIA…YKMCHGQNEA (119 aa). Positions 871-882 are enriched in acidic residues; the sequence is AEGEVEEEDEDT. Low complexity predominate over residues 887–900; sequence AIAESAAASEAGES. Zn(2+) is bound by residues Cys-947, Cys-949, Cys-958, and His-959.

This sequence belongs to the SecA family. As to quaternary structure, monomer and homodimer. Part of the essential Sec protein translocation apparatus which comprises SecA, SecYEG and auxiliary proteins SecDF. Other proteins may also be involved. The cofactor is Zn(2+).

It is found in the cell membrane. The protein localises to the cytoplasm. It catalyses the reaction ATP + H2O + cellular proteinSide 1 = ADP + phosphate + cellular proteinSide 2.. Functionally, part of the Sec protein translocase complex. Interacts with the SecYEG preprotein conducting channel. Has a central role in coupling the hydrolysis of ATP to the transfer of proteins into and across the cell membrane, serving as an ATP-driven molecular motor driving the stepwise translocation of polypeptide chains across the membrane. In Bifidobacterium longum subsp. infantis (strain ATCC 15697 / DSM 20088 / JCM 1222 / NCTC 11817 / S12), this protein is Protein translocase subunit SecA.